The following is a 297-amino-acid chain: Guanylate kinase (297 aa).

The region spanning 5–184 (GKVIIISGPS…AVSKITDILI (180 aa)) is the Guanylate kinase-like domain. Position 12 to 19 (12 to 19 (GPSGVGKG)) interacts with ATP. Positions 205–297 (ENIVDQKYTY…IKQRSDFSGD (93 aa)) are unknown.

It belongs to the guanylate kinase family.

It localises to the cytoplasm. It catalyses the reaction GMP + ATP = GDP + ADP. Essential for recycling GMP and indirectly, cGMP. In Mesoplasma florum (strain ATCC 33453 / NBRC 100688 / NCTC 11704 / L1) (Acholeplasma florum), this protein is Guanylate kinase (gmk).